We begin with the raw amino-acid sequence, 839 residues long: MPKGPKQQPPEPEWIGDGEGTSPADKVVKKGKKDKKTKKTFFEELAVEDKQAGEEEKLQKEKEQQQQQQQQKKKRDTRKGRRKKDVDDDDDGDERVLMERLKQLSVPASDEEDEVPVPVPRGRKKAKGGNVFEALIQDESEEEKEEEEEKPVLKPAKPEKNRINKAVAEEPPGLRNKKGKEEKSKGKAKNKPSATDSEGEDDEDMTKEKEPPRPGKDKDKKGAEQGSEEEKEEKEGEVKANDPYAHLSKKEKKKLKKQMDYERQVESLKAANAAENDFSVSQAEVSSRQAMLENASDIKLEKFSISAHGKELFVNADLYIVAGRRYGLVGPNGKGKTTLLKHIANRALSIPPNIDVLLCEQEVVADETPAVQAVLRADTKRLRLLEEEKRLQGQLEQGDDTAAEKLEKVYEELRATGAAAAEAKARRILAGLGFDPEMQNRPTQKFSGGWRMRVSLARALFMEPTLLMLDEPTNHLDLNAVIWLNNYLQGWRKTLLIVSHDQGFLDDVCTDIIHLDTQRLHYYRGNYMTFKKMYQQKQKELLKQYEKQEKKLKELKAGGKSTKQAEKQTKEVLTRKQQKCRRKNQDEESQDPPELLKRPREYTVRFTFPDPPPLSPPVLGLHGVTFGYEGQKPLFKNLDFGIDMDSRICIVGPNGVGKSTLLLLLTGKLTPTNGEMRKNHRLKIGFFNQQYAEQLHMEETPTEYLQRGFNLPYQDARKCLGRFGLESHAHTIQICKLSGGQKARVVFAELACREPDVLILDEPTNNLDIESIDALGEAINEYKGAVIVVSHDARLITETNCQLWVVEEQSVSQIDGDFDDYKREVLEALGEVMVNRPRD.

Residues 1 to 258 (MPKGPKQQPP…KKEKKKLKKQ (258 aa)) are disordered. Position 22 is a phosphoserine (Ser-22). Positions 29-39 (KKGKKDKKTKK) are enriched in basic residues. Over residues 47–64 (VEDKQAGEEEKLQKEKEQ) the composition is skewed to basic and acidic residues. Basic residues predominate over residues 71–83 (QKKKRDTRKGRRK). 3 positions are modified to phosphoserine: Ser-105, Ser-109, and Ser-140. Residues 136 to 149 (IQDESEEEKEEEEE) are compositionally biased toward acidic residues. Basic and acidic residues predominate over residues 150-162 (KPVLKPAKPEKNR). Position 195 is a phosphothreonine (Thr-195). Ser-197 is modified (phosphoserine). Residues 206–223 (TKEKEPPRPGKDKDKKGA) show a composition bias toward basic and acidic residues. The residue at position 227 (Ser-227) is a Phosphoserine. Basic residues predominate over residues 247–256 (LSKKEKKKLK). In terms of domain architecture, ABC transporter 1 spans 298-542 (IKLEKFSISA…MYQQKQKELL (245 aa)). 330–337 (GPNGKGKT) contributes to the ATP binding site. Over residues 553–574 (KELKAGGKSTKQAEKQTKEVLT) the composition is skewed to basic and acidic residues. The tract at residues 553 to 600 (KELKAGGKSTKQAEKQTKEVLTRKQQKCRRKNQDEESQDPPELLKRPR) is disordered. Position 589 is a phosphoserine (Ser-589). An ABC transporter 2 domain is found at 619–834 (LGLHGVTFGY…VLEALGEVMV (216 aa)). 652 to 659 (GPNGVGKS) serves as a coordination point for ATP.

As to quaternary structure, interacts (via N-terminus) with EIF2S1; the interaction is independent of its phosphorylated status. Associates (via both ABC transporter domains) with the ribosomes. Phosphorylated at phosphoserine and phosphothreonine. Phosphorylation on Ser-109 and Ser-140 by CK2; inhibits association of EIF2 with ribosomes.

The protein resides in the cytoplasm. It is found in the nucleus. It localises to the nucleoplasm. The protein localises to the nucleus envelope. In terms of biological role, required for efficient Cap- and IRES-mediated mRNA translation initiation. Not involved in the ribosome biogenesis. The chain is ATP-binding cassette sub-family F member 1 (Abcf1) from Rattus norvegicus (Rat).